Reading from the N-terminus, the 143-residue chain is Large ribosomal subunit protein uL13 (143 aa).

It belongs to the universal ribosomal protein uL13 family. Part of the 50S ribosomal subunit.

Functionally, this protein is one of the early assembly proteins of the 50S ribosomal subunit, although it is not seen to bind rRNA by itself. It is important during the early stages of 50S assembly. The protein is Large ribosomal subunit protein uL13 of Dehalococcoides mccartyi (strain ATCC BAA-2100 / JCM 16839 / KCTC 5957 / BAV1).